Reading from the N-terminus, the 466-residue chain is Chromosomal replication initiator protein DnaA (466 aa).

A domain I, interacts with DnaA modulators region spans residues 1-86 (MSLSLWQQCL…EVGTKPVTQT (86 aa)). The segment at 86-129 (TLKTPVHNVVAPTQTTTAQPQRVAPAARSGWDNVPAPAEPTYRS) is domain II. The segment at 130–346 (NVNVKHTFDN…GALNRVIANA (217 aa)) is domain III, AAA+ region. Residues glycine 174, glycine 176, lysine 177, and threonine 178 each contribute to the ATP site. The interval 347-466 (NFTGRAITID…FSNLIRTLSS (120 aa)) is domain IV, binds dsDNA.

This sequence belongs to the DnaA family. As to quaternary structure, oligomerizes as a right-handed, spiral filament on DNA at oriC.

The protein resides in the cytoplasm. Its function is as follows. Plays an essential role in the initiation and regulation of chromosomal replication. ATP-DnaA binds to the origin of replication (oriC) to initiate formation of the DNA replication initiation complex once per cell cycle. Binds the DnaA box (a 9 base pair repeat at the origin) and separates the double-stranded (ds)DNA. Forms a right-handed helical filament on oriC DNA; dsDNA binds to the exterior of the filament while single-stranded (ss)DNA is stabiized in the filament's interior. The ATP-DnaA-oriC complex binds and stabilizes one strand of the AT-rich DNA unwinding element (DUE), permitting loading of DNA polymerase. After initiation quickly degrades to an ADP-DnaA complex that is not apt for DNA replication. Binds acidic phospholipids. This is Chromosomal replication initiator protein DnaA from Salmonella gallinarum (strain 287/91 / NCTC 13346).